Reading from the N-terminus, the 450-residue chain is Probable ATP-dependent RNA helicase MG425 homolog (450 aa).

Positions 3–31 (STFNELGVSPALIATLKDNNINQPTTIQQ) match the Q motif motif. Residues 34–206 (IPQFLQHQNL…KQITKNGIFL (173 aa)) form the Helicase ATP-binding domain. 47–54 (SPTGTGKT) provides a ligand contact to ATP. A DEVD box motif is present at residues 154–157 (DEVD). Residues 234-384 (RKKQALYSLV…PLRPMRLRLI (151 aa)) form the Helicase C-terminal domain. Positions 429 to 450 (MRQPERDMQKNKLHDSDWQSNM) are disordered. Residues 430 to 450 (RQPERDMQKNKLHDSDWQSNM) are compositionally biased toward basic and acidic residues.

This sequence belongs to the DEAD box helicase family.

It carries out the reaction ATP + H2O = ADP + phosphate + H(+). The protein is Probable ATP-dependent RNA helicase MG425 homolog of Mycoplasma pneumoniae (strain ATCC 29342 / M129 / Subtype 1) (Mycoplasmoides pneumoniae).